We begin with the raw amino-acid sequence, 166 residues long: Large ribosomal subunit protein uL10 (166 aa).

It belongs to the universal ribosomal protein uL10 family. As to quaternary structure, part of the ribosomal stalk of the 50S ribosomal subunit. The N-terminus interacts with L11 and the large rRNA to form the base of the stalk. The C-terminus forms an elongated spine to which L12 dimers bind in a sequential fashion forming a multimeric L10(L12)X complex.

Functionally, forms part of the ribosomal stalk, playing a central role in the interaction of the ribosome with GTP-bound translation factors. This chain is Large ribosomal subunit protein uL10, found in Ureaplasma urealyticum serovar 10 (strain ATCC 33699 / Western).